Consider the following 175-residue polypeptide: RNA pyrophosphohydrolase (175 aa).

In terms of domain architecture, Nudix hydrolase spans 6–149 (GYRPNVGIIL…KRQVYQQALT (144 aa)). Residues 38 to 59 (GGIKHGESPEQAMYRELYEEVG) carry the Nudix box motif.

The protein belongs to the Nudix hydrolase family. RppH subfamily. A divalent metal cation serves as cofactor.

Accelerates the degradation of transcripts by removing pyrophosphate from the 5'-end of triphosphorylated RNA, leading to a more labile monophosphorylated state that can stimulate subsequent ribonuclease cleavage. In Azoarcus sp. (strain BH72), this protein is RNA pyrophosphohydrolase.